Reading from the N-terminus, the 479-residue chain is Wax ester synthase/diacylglycerol acyltransferase 2 (479 aa).

Residues 1–182 (MAIERQVTEA…VAPKKNKAKN (182 aa)) lie on the Cytoplasmic side of the membrane. Residue His144 is the Proton acceptor of the active site. A helical membrane pass occupies residues 183 to 199 (VCFSLVAWLWFIVRLMF). Residues 200 to 479 (HTCVEVIKSI…PKKVFHASKV (280 aa)) lie on the Lumenal side of the membrane. N-linked (GlcNAc...) asparagine glycosylation is present at Asn253.

This sequence in the N-terminal section; belongs to the long-chain O-acyltransferase family. Mostly expressed in flowers and siliques and barely in roots and stems.

The protein localises to the cell membrane. It is found in the endoplasmic reticulum membrane. It catalyses the reaction an acyl-CoA + a 1,2-diacyl-sn-glycerol = a triacyl-sn-glycerol + CoA. The catalysed reaction is a long chain fatty alcohol + a fatty acyl-CoA = a wax ester + CoA. The protein operates within glycerolipid metabolism; triacylglycerol biosynthesis. It functions in the pathway lipid metabolism. Bifunctional wax ester synthase/diacylglycerol acyltransferase. Involved in cuticular wax biosynthesis. The sequence is that of Wax ester synthase/diacylglycerol acyltransferase 2 from Arabidopsis thaliana (Mouse-ear cress).